The sequence spans 234 residues: Sugar fermentation stimulation protein homolog (234 aa).

The protein belongs to the SfsA family.

The protein is Sugar fermentation stimulation protein homolog of Shewanella baltica (strain OS223).